Here is a 331-residue protein sequence, read N- to C-terminus: tRNA N6-adenosine threonylcarbamoyltransferase (331 aa).

Fe cation-binding residues include His107 and His111. Substrate-binding positions include 129 to 133 (LVSGG), Asp162, Gly175, and Asn269. Position 297 (Asp297) interacts with Fe cation.

This sequence belongs to the KAE1 / TsaD family. Fe(2+) is required as a cofactor.

The protein resides in the cytoplasm. The enzyme catalyses L-threonylcarbamoyladenylate + adenosine(37) in tRNA = N(6)-L-threonylcarbamoyladenosine(37) in tRNA + AMP + H(+). Required for the formation of a threonylcarbamoyl group on adenosine at position 37 (t(6)A37) in tRNAs that read codons beginning with adenine. Is involved in the transfer of the threonylcarbamoyl moiety of threonylcarbamoyl-AMP (TC-AMP) to the N6 group of A37, together with TsaE and TsaB. TsaD likely plays a direct catalytic role in this reaction. This is tRNA N6-adenosine threonylcarbamoyltransferase from Wolinella succinogenes (strain ATCC 29543 / DSM 1740 / CCUG 13145 / JCM 31913 / LMG 7466 / NCTC 11488 / FDC 602W) (Vibrio succinogenes).